Consider the following 299-residue polypeptide: Probable lipid kinase YegS (299 aa).

Residues 2–133 (AEFPASLLIL…IDMAQVNKQT (132 aa)) enclose the DAGKc domain. ATP contacts are provided by residues Thr40, 66–72 (GDGTINE), and Thr95. Mg(2+)-binding residues include Leu215, Asp218, and Leu220. The Proton acceptor role is filled by Glu271.

The protein belongs to the diacylglycerol/lipid kinase family. YegS lipid kinase subfamily. Mg(2+) serves as cofactor. Ca(2+) is required as a cofactor.

The protein localises to the cytoplasm. Probably phosphorylates lipids; the in vivo substrate is unknown. This Escherichia coli O9:H4 (strain HS) protein is Probable lipid kinase YegS.